We begin with the raw amino-acid sequence, 218 residues long: Hypoxanthine-guanine phosphoribosyltransferase (218 aa).

Position 2 is an N-acetylalanine (Ala2). Lys69 serves as a coordination point for GMP. N6-acetyllysine is present on Lys103. Residue Lys115 forms a Glycyl lysine isopeptide (Lys-Gly) (interchain with G-Cter in SUMO1); alternate linkage. Residue Lys115 forms a Glycyl lysine isopeptide (Lys-Gly) (interchain with G-Cter in SUMO2); alternate linkage. GMP-binding positions include 134 to 142 (EDIIDTGKT), Lys166, 186 to 188 (KFV), and Asp194. Asp138 acts as the Proton acceptor in catalysis. Thr142 is modified (phosphothreonine). Asp194 is a binding site for Mg(2+).

This sequence belongs to the purine/pyrimidine phosphoribosyltransferase family. As to quaternary structure, homotetramer. Requires Mg(2+) as cofactor.

It is found in the cytoplasm. The enzyme catalyses IMP + diphosphate = hypoxanthine + 5-phospho-alpha-D-ribose 1-diphosphate. It catalyses the reaction GMP + diphosphate = guanine + 5-phospho-alpha-D-ribose 1-diphosphate. It functions in the pathway purine metabolism; IMP biosynthesis via salvage pathway; IMP from hypoxanthine: step 1/1. Functionally, converts guanine to guanosine monophosphate, and hypoxanthine to inosine monophosphate. Transfers the 5-phosphoribosyl group from 5-phosphoribosylpyrophosphate onto the purine. Plays a central role in the generation of purine nucleotides through the purine salvage pathway. The protein is Hypoxanthine-guanine phosphoribosyltransferase (HPRT1) of Sus scrofa (Pig).